A 332-amino-acid polypeptide reads, in one-letter code: Fructose-1,6-bisphosphatase class 1 (332 aa).

Residues Glu89, Asp110, Leu112, and Asp113 each coordinate Mg(2+). Substrate contacts are provided by residues 113–116, Asn206, Tyr239, 257–259, and Lys269; these read DGSS and YLY. Position 275 (Glu275) interacts with Mg(2+).

Belongs to the FBPase class 1 family. In terms of assembly, homotetramer. It depends on Mg(2+) as a cofactor.

Its subcellular location is the cytoplasm. It carries out the reaction beta-D-fructose 1,6-bisphosphate + H2O = beta-D-fructose 6-phosphate + phosphate. It participates in carbohydrate biosynthesis; gluconeogenesis. The protein is Fructose-1,6-bisphosphatase class 1 of Salmonella typhi.